A 139-amino-acid polypeptide reads, in one-letter code: Large ribosomal subunit protein uL14 (139 aa).

It belongs to the universal ribosomal protein uL14 family.

This is Large ribosomal subunit protein uL14 (RPL23) from Syntrichia ruralis (Great hairy screw-moss).